Consider the following 263-residue polypeptide: Tryptophan synthase alpha chain (263 aa).

Active-site proton acceptor residues include Glu-46 and Asp-57.

Belongs to the TrpA family. As to quaternary structure, tetramer of two alpha and two beta chains.

The catalysed reaction is (1S,2R)-1-C-(indol-3-yl)glycerol 3-phosphate + L-serine = D-glyceraldehyde 3-phosphate + L-tryptophan + H2O. It participates in amino-acid biosynthesis; L-tryptophan biosynthesis; L-tryptophan from chorismate: step 5/5. Functionally, the alpha subunit is responsible for the aldol cleavage of indoleglycerol phosphate to indole and glyceraldehyde 3-phosphate. This chain is Tryptophan synthase alpha chain, found in Bacteroides fragilis (strain ATCC 25285 / DSM 2151 / CCUG 4856 / JCM 11019 / LMG 10263 / NCTC 9343 / Onslow / VPI 2553 / EN-2).